The sequence spans 1347 residues: Neurofascin (1347 aa).

The signal sequence occupies residues 1–24; the sequence is MARQPPPPWVHAAFLLCLLSLGGA. Residues 25 to 1217 lie on the Extracellular side of the membrane; it reads IEIPMDPSIQ…NQADIATQGW (1193 aa). Ig-like C2-type domains lie at 41-137, 143-230, 244-332, 337-424, 429-517, and 521-603; these read PTIT…LQVS, PKEN…NPFT, PSFM…ISVR, PYWL…AFVS, PPRM…VRLE, and PTRI…QDLA. 4 disulfide bridges follow: C63-C118, C162-C213, C268-C316, and C358-C408. N305 is a glycosylation site (N-linked (GlcNAc...) asparagine). Residues N409 and N446 are each glycosylated (N-linked (GlcNAc...) asparagine). Intrachain disulfides connect C452-C501 and C543-C592. Residue Y481 is modified to Phosphotyrosine. N-linked (GlcNAc...) asparagine glycosylation occurs at N483. At S485 the chain carries Phosphoserine. 4 consecutive Fibronectin type-III domains span residues 630–725, 730–823, 828–930, and 934–1030; these read RPRD…TSGA, NPGD…SGED, APTE…TPEG, and APRR…PNEA. The tract at residues 713–740 is disordered; sequence PSLPSERYRTSGAPPESNPGDVKGEGTR. N-linked (GlcNAc...) asparagine glycans are attached at residues N752 and N778. The interval 915–934 is disordered; sequence GDGPRSETKEFTTPEGVPSA. Over residues 916-926 the composition is skewed to basic and acidic residues; sequence DGPRSETKEFT. N973 and N988 each carry an N-linked (GlcNAc...) asparagine glycan. 2 disordered regions span residues 1011 to 1040 and 1090 to 1111; these read TQVG…PTLP and TTAA…TKIH. A compositionally biased stretch (pro residues) spans 1024–1040; sequence PAPPNEATPTAAPPTLP. The segment covering 1090–1105 has biased composition (low complexity); that stretch reads TTAAATTTTESPPTTT. Residues 1114 to 1206 form the Fibronectin type-III 5 domain; the sequence is APDEQSIWNV…ITFMTSTAYT (93 aa). Residues 1218–1238 traverse the membrane as a helical segment; the sequence is FIGLMCAIALLVLILLIVCFI. Residues 1239-1347 lie on the Cytoplasmic side of the membrane; that stretch reads KRSRGGKYPV…SPVNAIYSLA (109 aa). Residues 1248–1347 form a disordered region; that stretch reads VREKKDVPLG…SPVNAIYSLA (100 aa). A compositionally biased stretch (acidic residues) spans 1261–1272; that stretch reads PKEEDGSFDYSD. Phosphoserine occurs at positions 1267, 1281, 1294, 1297, 1333, 1334, and 1338. Residues 1278–1291 show a composition bias toward polar residues; that stretch reads LQGSQTSLDGTIKQ.

It belongs to the immunoglobulin superfamily. L1/neurofascin/NgCAM family. In terms of assembly, horseshoe-shaped homodimer. Probable constituent of a NFASC/NRCAM/ankyrin-G complex. Associates with the sodium channel beta-1 (SCN1B) and beta-3 (SCN3B) subunits. Interacts with GLDN/gliomedin. Interacts with MYOC.

Its subcellular location is the cell membrane. It is found in the cell junction. It localises to the paranodal septate junction. Functionally, cell adhesion, ankyrin-binding protein which may be involved in neurite extension, axonal guidance, synaptogenesis, myelination and neuron-glial cell interactions. The protein is Neurofascin (NFASC) of Homo sapiens (Human).